Consider the following 364-residue polypeptide: Deoxyribonuclease-2-alpha (364 aa).

Residues 1–21 (MATLSPLLLAALLWVPVGTLT) form the signal peptide. A disulfide bridge connects residues Cys-22 and Cys-161. Asn-72, Asn-88, Asn-171, Asn-214, Asn-268, and Asn-292 each carry an N-linked (GlcNAc...) asparagine glycan. Disulfide bonds link Cys-269–Cys-349 and Cys-310–Cys-329. His-297 is a catalytic residue.

This sequence belongs to the DNase II family.

The protein resides in the lysosome. It catalyses the reaction Endonucleolytic cleavage to nucleoside 3'-phosphates and 3'-phosphooligonucleotide end-products.. Functionally, hydrolyzes DNA under acidic conditions with a preference for double-stranded DNA. Plays a major role in the clearance of nucleic acids generated through apoptosis, hence preventing autoinflammation. Necessary for proper fetal development and for definitive erythropoiesis in fetal liver and bone marrow, where it degrades nuclear DNA expelled from erythroid precursor cells. This Sus scrofa (Pig) protein is Deoxyribonuclease-2-alpha (DNASE2).